An 887-amino-acid polypeptide reads, in one-letter code: Alanine--tRNA ligase (887 aa).

Histidine 564, histidine 568, cysteine 675, and histidine 679 together coordinate Zn(2+). Positions 851-866 (GQGGGGRPDMAQGGGP) are enriched in gly residues. The segment at 851–871 (GQGGGGRPDMAQGGGPDGDKA) is disordered.

Belongs to the class-II aminoacyl-tRNA synthetase family. Zn(2+) serves as cofactor.

It localises to the cytoplasm. The enzyme catalyses tRNA(Ala) + L-alanine + ATP = L-alanyl-tRNA(Ala) + AMP + diphosphate. Catalyzes the attachment of alanine to tRNA(Ala) in a two-step reaction: alanine is first activated by ATP to form Ala-AMP and then transferred to the acceptor end of tRNA(Ala). Also edits incorrectly charged Ser-tRNA(Ala) and Gly-tRNA(Ala) via its editing domain. The chain is Alanine--tRNA ligase from Rhizorhabdus wittichii (strain DSM 6014 / CCUG 31198 / JCM 15750 / NBRC 105917 / EY 4224 / RW1) (Sphingomonas wittichii).